Reading from the N-terminus, the 433-residue chain is Glycerol-3-phosphate dehydrogenase [NAD(+)] (433 aa).

NAD(+) contacts are provided by residues 17–22, Phe-49, and Phe-117; that span reads GSGNWG. Lys-140 lines the substrate pocket. Ala-173 contributes to the NAD(+) binding site. Residues 187–246 form a disordered region; it reads IAYDPPPIDSSRAATPRDRSPNYDSTSANKLPDLTVTSADSNGKDDRGRRTKAKLTPVPE. Residues 208–227 show a composition bias toward polar residues; it reads NYDSTSANKLPDLTVTSADS. Lys-283 (proton acceptor) is an active-site residue. 2 residues coordinate NAD(+): Arg-349 and Gln-378. Substrate is bound at residue 349–350; it reads RN.

This sequence belongs to the NAD-dependent glycerol-3-phosphate dehydrogenase family.

The catalysed reaction is sn-glycerol 3-phosphate + NAD(+) = dihydroxyacetone phosphate + NADH + H(+). This is Glycerol-3-phosphate dehydrogenase [NAD(+)] from Pyricularia oryzae (strain Y34) (Rice blast fungus).